The following is a 195-amino-acid chain: Imidazoleglycerol-phosphate dehydratase (195 aa).

It belongs to the imidazoleglycerol-phosphate dehydratase family.

It is found in the cytoplasm. The catalysed reaction is D-erythro-1-(imidazol-4-yl)glycerol 3-phosphate = 3-(imidazol-4-yl)-2-oxopropyl phosphate + H2O. Its pathway is amino-acid biosynthesis; L-histidine biosynthesis; L-histidine from 5-phospho-alpha-D-ribose 1-diphosphate: step 6/9. This Nitrosomonas eutropha (strain DSM 101675 / C91 / Nm57) protein is Imidazoleglycerol-phosphate dehydratase.